Reading from the N-terminus, the 250-residue chain is Manganese transport system ATP-binding protein MntB (250 aa).

Residues 4-236 enclose the ABC transporter domain; it reads VELDNVTVAY…NLQKTYGGRL (233 aa). 36 to 43 is an ATP binding site; that stretch reads GPNGAGKS.

This sequence belongs to the ABC transporter superfamily. In terms of assembly, the complex is probably composed of two ATP-binding proteins (MntB), two transmembrane proteins (MntC and MntD) and a solute-binding protein (MntA).

It localises to the cell membrane. Its function is as follows. Probably part of the ABC transporter complex MntABCD involved in manganese import. Probably responsible for energy coupling to the transport system. The sequence is that of Manganese transport system ATP-binding protein MntB from Bacillus subtilis (strain 168).